The sequence spans 286 residues: Shikimate dehydrogenase (NADP(+)) (286 aa).

Shikimate is bound by residues 19-21 and T66; that span reads SFS. K70 (proton acceptor) is an active-site residue. Positions 91 and 107 each coordinate shikimate. NADP(+) contacts are provided by residues 129–133 and L229; that span reads GSGGA. Y231 contacts shikimate. G252 is an NADP(+) binding site.

It belongs to the shikimate dehydrogenase family. As to quaternary structure, homodimer.

The enzyme catalyses shikimate + NADP(+) = 3-dehydroshikimate + NADPH + H(+). The protein operates within metabolic intermediate biosynthesis; chorismate biosynthesis; chorismate from D-erythrose 4-phosphate and phosphoenolpyruvate: step 4/7. Its function is as follows. Involved in the biosynthesis of the chorismate, which leads to the biosynthesis of aromatic amino acids. Catalyzes the reversible NADPH linked reduction of 3-dehydroshikimate (DHSA) to yield shikimate (SA). The sequence is that of Shikimate dehydrogenase (NADP(+)) from Prochlorococcus marinus (strain MIT 9301).